A 368-amino-acid chain; its full sequence is Queuine tRNA-ribosyltransferase (368 aa).

The Proton acceptor role is filled by Asp89. Substrate contacts are provided by residues 89-93, Asp143, Gln187, and Gly214; that span reads DSGGF. Residue Asp264 is the Nucleophile of the active site. Positions 269–273 are RNA binding; important for wobble base 34 recognition; it reads TRNAR. Positions 302, 304, 307, and 333 each coordinate Zn(2+).

The protein belongs to the queuine tRNA-ribosyltransferase family. As to quaternary structure, homodimer. Within each dimer, one monomer is responsible for RNA recognition and catalysis, while the other monomer binds to the replacement base PreQ1. It depends on Zn(2+) as a cofactor.

The catalysed reaction is 7-aminomethyl-7-carbaguanine + guanosine(34) in tRNA = 7-aminomethyl-7-carbaguanosine(34) in tRNA + guanine. It participates in tRNA modification; tRNA-queuosine biosynthesis. Its function is as follows. Catalyzes the base-exchange of a guanine (G) residue with the queuine precursor 7-aminomethyl-7-deazaguanine (PreQ1) at position 34 (anticodon wobble position) in tRNAs with GU(N) anticodons (tRNA-Asp, -Asn, -His and -Tyr). Catalysis occurs through a double-displacement mechanism. The nucleophile active site attacks the C1' of nucleotide 34 to detach the guanine base from the RNA, forming a covalent enzyme-RNA intermediate. The proton acceptor active site deprotonates the incoming PreQ1, allowing a nucleophilic attack on the C1' of the ribose to form the product. After dissociation, two additional enzymatic reactions on the tRNA convert PreQ1 to queuine (Q), resulting in the hypermodified nucleoside queuosine (7-(((4,5-cis-dihydroxy-2-cyclopenten-1-yl)amino)methyl)-7-deazaguanosine). The sequence is that of Queuine tRNA-ribosyltransferase from Blochmanniella pennsylvanica (strain BPEN).